Here is a 411-residue protein sequence, read N- to C-terminus: Putative competence-damage inducible protein (411 aa).

The protein belongs to the CinA family.

This Caldicellulosiruptor bescii (strain ATCC BAA-1888 / DSM 6725 / KCTC 15123 / Z-1320) (Anaerocellum thermophilum) protein is Putative competence-damage inducible protein.